The sequence spans 593 residues: ABC transporter F family member 2 (593 aa).

Residues 1 to 10 show a composition bias toward basic residues; sequence MAKKGGKNNK. A disordered region spans residues 1–25; the sequence is MAKKGGKNNKSKKEVTPPTSDVEDE. 2 consecutive ABC transporter domains span residues 53 to 294 and 364 to 583; these read VKIE…VNQM and MHFD…RDLT. ATP is bound by residues 85-92 and 399-406; these read GQNGCGKS and GPNGAGKS.

The protein belongs to the ABC transporter superfamily. ABCF family. EF3 subfamily.

This Dictyostelium discoideum (Social amoeba) protein is ABC transporter F family member 2 (abcF2).